The chain runs to 185 residues: MIEIRFHGRGGQGAVTAANILASAAFKEGKYVQAFPFFGVERRGAPVTAFTRIDDKPIRIKTQIYEPDVVVVLDPSLLDTVDVTAGLKDGGIVIVNTEKSKEEVLEKLKKKPGKLALVDATGIALEILGLPITNTAILGAVAKATGLVKLESVQEAIKETFSGALGEKNAKAAEEAFNKTVVYEL.

As to quaternary structure, heterotetramer of one alpha, one beta, one delta and one gamma chain.

It carries out the reaction 2 oxidized [2Fe-2S]-[ferredoxin] + pyruvate + CoA = 2 reduced [2Fe-2S]-[ferredoxin] + acetyl-CoA + CO2 + H(+). It catalyses the reaction 3-methyl-2-oxobutanoate + 2 oxidized [2Fe-2S]-[ferredoxin] + CoA = 2-methylpropanoyl-CoA + 2 reduced [2Fe-2S]-[ferredoxin] + CO2 + H(+). In Thermococcus kodakarensis (strain ATCC BAA-918 / JCM 12380 / KOD1) (Pyrococcus kodakaraensis (strain KOD1)), this protein is Pyruvate/ketoisovalerate oxidoreductases common subunit gamma (porG).